Consider the following 138-residue polypeptide: MVLKWVMSTKYVEAGELKEGSYVVIDGEPCRVVEIEKSKTGKHGSAKARIVAVGVFDGGKRTLSLPVDAQVEVPIIEKFTAQILSVSGDVIQLMDMRDYKTIEVPMKYVEEEAKGRLAPGAEVEVWQILDRYKIIRVK.

Position 42 is a hypusine (Lys-42).

This sequence belongs to the eIF-5A family.

Its subcellular location is the cytoplasm. Functionally, functions by promoting the formation of the first peptide bond. This is Translation initiation factor 5A (eif5a) from Pyrobaculum aerophilum (strain ATCC 51768 / DSM 7523 / JCM 9630 / CIP 104966 / NBRC 100827 / IM2).